We begin with the raw amino-acid sequence, 252 residues long: Imidazole glycerol phosphate synthase subunit HisF (252 aa).

Catalysis depends on residues Asp-11 and Asp-130.

Belongs to the HisA/HisF family. Heterodimer of HisH and HisF.

It is found in the cytoplasm. The enzyme catalyses 5-[(5-phospho-1-deoxy-D-ribulos-1-ylimino)methylamino]-1-(5-phospho-beta-D-ribosyl)imidazole-4-carboxamide + L-glutamine = D-erythro-1-(imidazol-4-yl)glycerol 3-phosphate + 5-amino-1-(5-phospho-beta-D-ribosyl)imidazole-4-carboxamide + L-glutamate + H(+). The protein operates within amino-acid biosynthesis; L-histidine biosynthesis; L-histidine from 5-phospho-alpha-D-ribose 1-diphosphate: step 5/9. Its function is as follows. IGPS catalyzes the conversion of PRFAR and glutamine to IGP, AICAR and glutamate. The HisF subunit catalyzes the cyclization activity that produces IGP and AICAR from PRFAR using the ammonia provided by the HisH subunit. The protein is Imidazole glycerol phosphate synthase subunit HisF of Bacillus cytotoxicus (strain DSM 22905 / CIP 110041 / 391-98 / NVH 391-98).